A 275-amino-acid polypeptide reads, in one-letter code: Trypsin-4 (275 aa).

Positions Met1–Cys18 are cleaved as a signal peptide. A propeptide spans Ala19–Arg48 (activation peptide). A Peptidase S1 domain is found at Ile49–Gly274. Cys74 and Cys90 form a disulfide bridge. Active-site charge relay system residues include His89 and Asp134. 2 cysteine pairs are disulfide-bonded: Cys199/Cys215 and Cys226/Cys250. Residue Ser230 is the Charge relay system of the active site.

This sequence belongs to the peptidase S1 family. In terms of tissue distribution, expressed in the midgut. Expression levels drop a few hours after blood feeding and pick up again 28 hours later.

Its subcellular location is the secreted. The catalysed reaction is Preferential cleavage: Arg-|-Xaa, Lys-|-Xaa.. Constitutive trypsin that is expressed 2 days after emergence, coinciding with host seeking behavior of the female. This chain is Trypsin-4 (TRYP4), found in Anopheles gambiae (African malaria mosquito).